The primary structure comprises 209 residues: ATP-dependent Clp protease proteolytic subunit 1 (209 aa).

Catalysis depends on serine 109, which acts as the Nucleophile. Histidine 134 is a catalytic residue.

This sequence belongs to the peptidase S14 family. Fourteen ClpP subunits assemble into 2 heptameric rings which stack back to back to give a disk-like structure with a central cavity, resembling the structure of eukaryotic proteasomes.

The protein localises to the cytoplasm. The catalysed reaction is Hydrolysis of proteins to small peptides in the presence of ATP and magnesium. alpha-casein is the usual test substrate. In the absence of ATP, only oligopeptides shorter than five residues are hydrolyzed (such as succinyl-Leu-Tyr-|-NHMec, and Leu-Tyr-Leu-|-Tyr-Trp, in which cleavage of the -Tyr-|-Leu- and -Tyr-|-Trp bonds also occurs).. Its function is as follows. Cleaves peptides in various proteins in a process that requires ATP hydrolysis. Has a chymotrypsin-like activity. Plays a major role in the degradation of misfolded proteins. This is ATP-dependent Clp protease proteolytic subunit 1 from Corynebacterium diphtheriae (strain ATCC 700971 / NCTC 13129 / Biotype gravis).